The primary structure comprises 238 residues: MGQKIHPIGFRLGITQDHRSRWYADSDRYPELLQEDHRIRTFINQQLANAGIAEVRIERKADQVELQIRTARPGVVVGKGGQGIEELRKQLRQMLPANRTIKVNVVEVNRVDAEASLLAEYITQQLERRVAFRRAVRQAIQRAQRAGIEGIKVQVAGRLNGAEIARTEWTREGRVPLHTLRADIDYAYRTARTIYGILGVKVWIFKGEVLPGQTEAVPREATRRSPQRRLPQFENRSN.

Residues 39–109 (IRTFINQQLA…TIKVNVVEVN (71 aa)) enclose the KH type-2 domain. The disordered stretch occupies residues 215–238 (EAVPREATRRSPQRRLPQFENRSN).

Belongs to the universal ribosomal protein uS3 family. Part of the 30S ribosomal subunit. Forms a tight complex with proteins S10 and S14.

Functionally, binds the lower part of the 30S subunit head. Binds mRNA in the 70S ribosome, positioning it for translation. This is Small ribosomal subunit protein uS3 from Thermosynechococcus vestitus (strain NIES-2133 / IAM M-273 / BP-1).